The following is a 283-amino-acid chain: MNDSQRVSILSEALPYIQSFSGRKIVIKYGGSVMENDNLKNAFFRDIALLSTVGVCPIVIHGGGPEINNWLKKLEISPKFENGLRITDQKTMEIVEMVLMGRVNKQIVKGINKTGSLAVGISGLDGNLIQSRELGDGSHGLVGEVTKINPEILDPLISKGYIPIISSIGSTLEGISHNINADFVAGEIAAAINAEKLILLTDTQGILKEKDNKNSLVEKTNLKEARDFIDKKIVTEGMIPKTECCIRALAQGVKAAHIIDGRIEHSLLLEIFTNSGIGTMIVA.

Residues 63 to 64, Arg-85, and Asn-178 each bind substrate; that span reads GG.

This sequence belongs to the acetylglutamate kinase family. ArgB subfamily.

It localises to the cytoplasm. It carries out the reaction N-acetyl-L-glutamate + ATP = N-acetyl-L-glutamyl 5-phosphate + ADP. It functions in the pathway amino-acid biosynthesis; L-arginine biosynthesis; N(2)-acetyl-L-ornithine from L-glutamate: step 2/4. In terms of biological role, catalyzes the ATP-dependent phosphorylation of N-acetyl-L-glutamate. This Prochlorococcus marinus (strain MIT 9215) protein is Acetylglutamate kinase.